Consider the following 415-residue polypeptide: MPATVIREDGAYHSFCGLTCVGWLYQKIKDSFFLVLGTHTCAHLLQNVLGVMIFARPRFGVALIEEADLSKQQPELDRIIDEIVADHHPSVIFLLSSCTPEVMKVEFDGLARAVSRPNLPVLFVPASGLDYTFSQAEDSVLQALLPFCPVAPPDDRRVVFLGSVNDAIADDFRTEAARLGIPVAGFLPESHFHDLPPIGPGTVVAPLQPYLAKVAGRLARERGATVVSSLFPFGPDGTRAFWEDVAAAMGIAVDLRERERQAWERLEPHLDVLRGKKVFFTADNLMELPLARFLRHAGCTILECSSPYINRKFHARELEALDGVRVVEQPNFDRQLRDIQELRPDLVISNLATTNPLVGHGVVAKWSTEFSFMPIHGWSGAATLAGMFTRPLKRHAQLDPLMDDPLWVAGLMPAR.

[4Fe-4S] cluster is bound by residues Cys16, Cys41, and Cys98.

The protein belongs to the BchN/ChlN family. In terms of assembly, protochlorophyllide reductase is composed of three subunits; BchL, BchN and BchB. Forms a heterotetramer of two BchB and two BchN subunits. Requires [4Fe-4S] cluster as cofactor.

The catalysed reaction is chlorophyllide a + oxidized 2[4Fe-4S]-[ferredoxin] + 2 ADP + 2 phosphate = protochlorophyllide a + reduced 2[4Fe-4S]-[ferredoxin] + 2 ATP + 2 H2O. It participates in porphyrin-containing compound metabolism; bacteriochlorophyll biosynthesis (light-independent). Component of the dark-operative protochlorophyllide reductase (DPOR) that uses Mg-ATP and reduced ferredoxin to reduce ring D of protochlorophyllide (Pchlide) to form chlorophyllide a (Chlide). This reaction is light-independent. The NB-protein (BchN-BchB) is the catalytic component of the complex. This is Light-independent protochlorophyllide reductase subunit N from Roseiflexus sp. (strain RS-1).